Reading from the N-terminus, the 471-residue chain is Putative multidrug resistance protein MdtD (471 aa).

At 1-11 the chain is on the periplasmic side; the sequence is MTDLPDSTRWQ. The helical transmembrane segment at 12–32 threads the bilayer; sequence LWIVAFGFFMQSLDTTIVNTA. Topologically, residues 33–48 are cytoplasmic; it reads LPSMAQSLGESPLHMH. Residues 49–69 traverse the membrane as a helical segment; the sequence is MVIVSYVLTVAVMLPASGWLA. At 70-76 the chain is on the periplasmic side; the sequence is DKVGVRN. The chain crosses the membrane as a helical span at residues 77-97; the sequence is IFFTAIVLFTLGSLFCALSGT. Residues 98–101 are Cytoplasmic-facing; the sequence is LNEL. A helical transmembrane segment spans residues 102-124; the sequence is LLARALQGVGGAMMVPVGRLTVM. At 125–137 the chain is on the periplasmic side; that stretch reads KIVPREQYMAAMT. A helical transmembrane segment spans residues 138–158; it reads FVTLPGQVGPLLGPALGGLLV. The Cytoplasmic segment spans residues 159–164; that stretch reads EYASWH. A helical transmembrane segment spans residues 165-185; that stretch reads WIFLINIPVGIIGAIATLMLM. Over 186-196 the chain is Periplasmic; the sequence is PNYTMQTRRFD. Residues 197–217 traverse the membrane as a helical segment; it reads LSGFLLLAVGMAVLTLALDGS. Residues 218-224 are Cytoplasmic-facing; that stretch reads KGTGLSP. Residues 225 to 245 traverse the membrane as a helical segment; it reads LAIAGLVAVGVVALVLYLLHA. At 246-262 the chain is on the periplasmic side; that stretch reads RNNNRALFSLKLFRTRT. Residues 263–283 form a helical membrane-spanning segment; the sequence is FSLGLAGSFAGRIGSGMLPFM. Residues 284–285 are Cytoplasmic-facing; that stretch reads TP. The chain crosses the membrane as a helical span at residues 286 to 306; the sequence is VFLQIGLGFSPFHAGLMMIPM. Residues 307-341 lie on the Periplasmic side of the membrane; the sequence is VLGSMGMKRIVVQVVNRFGYRRVLVATTLGLSLVT. A helical transmembrane segment spans residues 342 to 362; sequence LLFMTTALLGWYYVLPFVLFL. At 363 to 395 the chain is on the cytoplasmic side; it reads QGMVNSTRFSSMNTLTLKDLPDNLASSGNSLLS. The chain crosses the membrane as a helical span at residues 396–416; the sequence is MIMQLSMSIGVTIAGLLLGLF. Residues 417-430 are Periplasmic-facing; that stretch reads GSQHVSVDSGTTQT. A helical membrane pass occupies residues 431–451; it reads VFMYTWLSMAFIIALPAFIFA. The Cytoplasmic segment spans residues 452-471; the sequence is RVPNDTHQNVAISRRKRSAQ.

This sequence belongs to the major facilitator superfamily. TCR/Tet family.

It localises to the cell inner membrane. This is Putative multidrug resistance protein MdtD from Escherichia coli (strain SMS-3-5 / SECEC).